We begin with the raw amino-acid sequence, 159 residues long: Transcription elongation factor GreA (159 aa).

A coiled-coil region spans residues 43-75; the sequence is LSENAEYDAAREEQSQLEAKIGEIENKLASATI.

Belongs to the GreA/GreB family.

Necessary for efficient RNA polymerase transcription elongation past template-encoded arresting sites. The arresting sites in DNA have the property of trapping a certain fraction of elongating RNA polymerases that pass through, resulting in locked ternary complexes. Cleavage of the nascent transcript by cleavage factors such as GreA or GreB allows the resumption of elongation from the new 3'terminus. GreA releases sequences of 2 to 3 nucleotides. The protein is Transcription elongation factor GreA of Chlorobaculum tepidum (strain ATCC 49652 / DSM 12025 / NBRC 103806 / TLS) (Chlorobium tepidum).